A 231-amino-acid polypeptide reads, in one-letter code: Probable cell wall protein ARB_06477 (231 aa).

The signal sequence occupies residues 1-17; that stretch reads MRSVLYLLFTAVAAVAA. The interval 107–206 is disordered; that stretch reads TPSFMVDGAT…TGMPTSSGAP (100 aa). Residues 121–204 are compositionally biased toward low complexity; sequence TGPTTSRTSM…SSTGMPTSSG (84 aa). The GPI-anchor amidated serine moiety is linked to residue S203. The propeptide at 204-231 is removed in mature form; the sequence is GAPDPNGAVSLALPGGLLSIVLSLMALL.

It belongs to the SRP1/TIP1 family. In terms of processing, the GPI-anchor is attached to the protein in the endoplasmic reticulum and serves to target the protein to the cell surface. There, the glucosamine-inositol phospholipid moiety is cleaved off and the GPI-modified mannoprotein is covalently attached via its lipidless GPI glycan remnant to the 1,6-beta-glucan of the outer cell wall layer.

The protein resides in the cell membrane. It is found in the secreted. The protein localises to the cell wall. Probable component of the cell wall. The sequence is that of Probable cell wall protein ARB_06477 from Arthroderma benhamiae (strain ATCC MYA-4681 / CBS 112371) (Trichophyton mentagrophytes).